The sequence spans 284 residues: Aldo-keto reductase MAV_3816 (284 aa).

Tyrosine 59 serves as the catalytic Proton donor. NADPH-binding residues include leucine 199, isoleucine 237, arginine 239, serine 240, alanine 241, serine 248, and arginine 275.

It belongs to the aldo/keto reductase family.

This is Aldo-keto reductase MAV_3816 from Mycobacterium avium (strain 104).